The following is a 285-amino-acid chain: Putative pyruvate, phosphate dikinase regulatory protein (285 aa).

Position 165–172 (165–172 (GVSRTSKT)) interacts with ADP.

This sequence belongs to the pyruvate, phosphate/water dikinase regulatory protein family. PDRP subfamily.

The catalysed reaction is N(tele)-phospho-L-histidyl/L-threonyl-[pyruvate, phosphate dikinase] + ADP = N(tele)-phospho-L-histidyl/O-phospho-L-threonyl-[pyruvate, phosphate dikinase] + AMP + H(+). It catalyses the reaction N(tele)-phospho-L-histidyl/O-phospho-L-threonyl-[pyruvate, phosphate dikinase] + phosphate + H(+) = N(tele)-phospho-L-histidyl/L-threonyl-[pyruvate, phosphate dikinase] + diphosphate. Its function is as follows. Bifunctional serine/threonine kinase and phosphorylase involved in the regulation of the pyruvate, phosphate dikinase (PPDK) by catalyzing its phosphorylation/dephosphorylation. The polypeptide is Putative pyruvate, phosphate dikinase regulatory protein (Lactobacillus delbrueckii subsp. bulgaricus (strain ATCC BAA-365 / Lb-18)).